The sequence spans 60 residues: LKCHKLVPPFWKTCPEGKNLCYKMYMVATPMIPVKRGCIDVCPKNSALVKYMCCNTNKCN.

Disulfide bonds link cysteine 3–cysteine 21, cysteine 14–cysteine 38, cysteine 42–cysteine 53, and cysteine 54–cysteine 59.

Belongs to the three-finger toxin family. Short-chain subfamily. Type IA cytotoxin sub-subfamily. Monomer in solution; Homodimer and oligomer in the presence of negatively charged lipids forming a pore with a size ranging between 20 and 30 Angstroms. As to expression, expressed by the venom gland.

It is found in the secreted. The protein localises to the target cell membrane. Its function is as follows. Shows cytolytic activity on many different cells by forming pore in lipid membranes. In vivo, increases heart rate or kills the animal by cardiac arrest. In addition, it binds to heparin with high affinity, interacts with Kv channel-interacting protein 1 (KCNIP1) in a calcium-independent manner, and binds to integrin alpha-V/beta-3 (ITGAV/ITGB3) with moderate affinity. This Naja annulifera (Banded Egyptian cobra) protein is Cytotoxin 5.